Here is a 502-residue protein sequence, read N- to C-terminus: Probable cytosol aminopeptidase (502 aa).

2 residues coordinate Mn(2+): lysine 270 and aspartate 275. Lysine 282 is an active-site residue. Mn(2+) is bound by residues aspartate 293, aspartate 352, and glutamate 354. Arginine 356 is a catalytic residue.

The protein belongs to the peptidase M17 family. Requires Mn(2+) as cofactor.

The protein resides in the cytoplasm. The enzyme catalyses Release of an N-terminal amino acid, Xaa-|-Yaa-, in which Xaa is preferably Leu, but may be other amino acids including Pro although not Arg or Lys, and Yaa may be Pro. Amino acid amides and methyl esters are also readily hydrolyzed, but rates on arylamides are exceedingly low.. It catalyses the reaction Release of an N-terminal amino acid, preferentially leucine, but not glutamic or aspartic acids.. Its function is as follows. Presumably involved in the processing and regular turnover of intracellular proteins. Catalyzes the removal of unsubstituted N-terminal amino acids from various peptides. The protein is Probable cytosol aminopeptidase of Buchnera aphidicola subsp. Schizaphis graminum (strain Sg).